The primary structure comprises 663 residues: Innate immunity activator protein (663 aa).

A disordered region spans residues 1-73; the sequence is MLQMPKLNEI…PGPGWDQCSP (73 aa). The span at 23-47 shows a compositional bias: low complexity; sequence EGRWAGPTGPEAARPARGARGQARG. A compositionally biased stretch (basic and acidic residues) spans 50-59; the sequence is ARWDSWEHSR. Residues 117–147 are a coiled coil; that stretch reads NAVRKQQRALEARLEACLEELRRLCLREAEL. Positions 164-170 match the Nuclear localization signal (NLS) 1 motif; sequence PKVRRRI. Disordered stretches follow at residues 219 to 363 and 375 to 405; these read RQRK…SSLW and IRNV…QSLR. Basic and acidic residues predominate over residues 225 to 246; the sequence is ALQEEKKLRDLQRCLGDRRRNS. Low complexity predominate over residues 259–272; it reads ELSASDDSSLSDGL. Residues 282 to 298 are compositionally biased toward pro residues; sequence PKPPPESPAPPSRPLPP. Positions 327–340 are enriched in basic and acidic residues; it reads TSLDHPYEKPRKSS. Residues 332–338 carry the Nuclear localization signal (NLS) 2 motif; sequence PYEKPRK. Over residues 349–361 the composition is skewed to polar residues; it reads PATTPQDQPNPSS. The short motif at 422–428 is the Nuclear localization signal (NLS) 3 element; the sequence is PRRRPTH. Positions 448–483 are disordered; sequence PACHSCSEDSGSDVSSISHPTSPGSSSPDISFLRPL. The span at 455–475 shows a compositional bias: low complexity; sequence EDSGSDVSSISHPTSPGSSSP.

As to quaternary structure, interacts with IRAK1, NOD2 and RIPK2; the interaction takes place upon PRR stimulation. Interacts with YWHAQ/14-3-3T; the interaction increases upon PRR stimulation and is required for cellular signaling pathway activation and cytokine secretion. Interacts (via N-terminal domain) with CYTH1 and CYTH2 (via their N-terminal domains). Interacts with FBXW11 and BTRC; associates with SCF E3 ubiquitin-protein ligase complexes.

It is found in the nucleus. Its subcellular location is the cytoplasm. Its function is as follows. Expressed in peripheral macrophages and intestinal myeloid-derived cells, is required for optimal PRR (pattern recognition receptor)-induced signaling, cytokine secretion, and bacterial clearance. Upon stimulation of a broad range of PRRs (pattern recognition receptor) such as NOD2 or TLR2, TLR3, TLR4, TLR5, TLR7 and TLR9, associates with YWHAQ/14-3-3T, which in turn leads to the recruitment and activation of MAP kinases and NF-kappa-B signaling complexes that amplifies PRR-induced downstream signals and cytokine secretion. In the intestine, regulates adherens junction stability by regulating the degradation of CYTH1 and CYTH2, probably acting as substrate cofactor for SCF E3 ubiquitin-protein ligase complexes. Stabilizes adherens junctions by limiting CYTH1-dependent ARF6 activation. This chain is Innate immunity activator protein, found in Mus musculus (Mouse).